Consider the following 288-residue polypeptide: Phytanoyl-CoA dioxygenase domain-containing protein 1 homolog (288 aa).

Residues Lys-95, Met-134, 149–151 (HVD), and Trp-167 each bind 2-oxoglutarate. His-149 and Asp-151 together coordinate Fe cation. Residue His-242 coordinates Fe cation. 2 residues coordinate 2-oxoglutarate: Ser-244 and Arg-253.

It belongs to the PhyH family. PHYHD1 subfamily. Fe cation is required as a cofactor.

Functionally, has alpha-ketoglutarate-dependent dioxygenase activity. Does not show detectable activity towards fatty acid CoA thioesters. Is not expected to be active with phytanoyl CoA. In Caenorhabditis briggsae, this protein is Phytanoyl-CoA dioxygenase domain-containing protein 1 homolog.